Here is a 270-residue protein sequence, read N- to C-terminus: MAVGVFDSGLGGLTVLSAIAARMPDLPLVYLGDNAHTPYGVRDADDIFDLTCAGVERLWAEGCDLVILACNTASAAALKRMQETWLPKDKRVLGVFVPMIEALTERRWGDNSPPREVAVKHVALFATPATVASRAFQRELAFRAIGVDVEAQPCGGVVDAIEMGDEILAEALVTSHVEALLRRMPHPEAAILGCTHYPLVQAAFQKALGPQVTVYSQPNLVAESLEDYLGRHPEMLGAGNVSRFLTTGDPERVSGKATQFLRHPIRFESA.

Substrate contacts are provided by residues 7–8 (DS) and 39–40 (YG). Catalysis depends on Cys70, which acts as the Proton donor/acceptor. 71–72 (NT) serves as a coordination point for substrate. Residue Cys194 is the Proton donor/acceptor of the active site. 195–196 (TH) contributes to the substrate binding site.

Belongs to the aspartate/glutamate racemases family.

The catalysed reaction is L-glutamate = D-glutamate. The protein operates within cell wall biogenesis; peptidoglycan biosynthesis. Its function is as follows. Provides the (R)-glutamate required for cell wall biosynthesis. This is Glutamate racemase from Paracoccus denitrificans (strain Pd 1222).